The primary structure comprises 264 residues: Thiazole synthase (264 aa).

Catalysis depends on K106, which acts as the Schiff-base intermediate with DXP. 1-deoxy-D-xylulose 5-phosphate is bound by residues G167, 193–194 (AG), and 215–216 (NS).

It belongs to the ThiG family. In terms of assembly, homotetramer. Forms heterodimers with either ThiH or ThiS.

The protein localises to the cytoplasm. It catalyses the reaction [ThiS sulfur-carrier protein]-C-terminal-Gly-aminoethanethioate + 2-iminoacetate + 1-deoxy-D-xylulose 5-phosphate = [ThiS sulfur-carrier protein]-C-terminal Gly-Gly + 2-[(2R,5Z)-2-carboxy-4-methylthiazol-5(2H)-ylidene]ethyl phosphate + 2 H2O + H(+). The protein operates within cofactor biosynthesis; thiamine diphosphate biosynthesis. In terms of biological role, catalyzes the rearrangement of 1-deoxy-D-xylulose 5-phosphate (DXP) to produce the thiazole phosphate moiety of thiamine. Sulfur is provided by the thiocarboxylate moiety of the carrier protein ThiS. In vitro, sulfur can be provided by H(2)S. This is Thiazole synthase from Pseudomonas fluorescens (strain SBW25).